Here is a 435-residue protein sequence, read N- to C-terminus: S-locus-specific glycoprotein BS29-2 (435 aa).

A signal peptide spans 1–30 (MKGVGKPYENSHTSFLLVFFVLTLFSPAFS). A Bulb-type lectin domain is found at 33–155 (TLSSIESLKI…NKNDRSGFLW (123 aa)). 5 N-linked (GlcNAc...) asparagine glycosylation sites follow: N113, N120, N244, N260, and N389. In terms of domain architecture, PAN spans 350 to 430 (CSGDGFTRMK…NGQDLYVRLA (81 aa)). 2 cysteine pairs are disulfide-bonded: C380/C405 and C388/C390.

As to expression, stigma.

Involved in sporophytic self-incompatibility system (the inability of flowering plants to achieve self-fertilization). In Brassica oleracea var. alboglabra (Chinese kale), this protein is S-locus-specific glycoprotein BS29-2 (SLSG).